A 588-amino-acid chain; its full sequence is A-type ATP synthase subunit A (588 aa).

Residue 237-244 (GPFGSGKT) participates in ATP binding.

This sequence belongs to the ATPase alpha/beta chains family. In terms of assembly, has multiple subunits with at least A(3), B(3), C, D, E, F, H, I and proteolipid K(x).

The protein resides in the cell membrane. The enzyme catalyses ATP + H2O + 4 H(+)(in) = ADP + phosphate + 5 H(+)(out). Its function is as follows. Component of the A-type ATP synthase that produces ATP from ADP in the presence of a proton gradient across the membrane. The A chain is the catalytic subunit. This Methanoregula boonei (strain DSM 21154 / JCM 14090 / 6A8) protein is A-type ATP synthase subunit A.